Consider the following 247-residue polypeptide: Uridylate kinase (247 aa).

17-20 (KFSG) is a binding site for ATP. Glycine 59 contacts UMP. Positions 60 and 64 each coordinate ATP. Residues aspartate 79 and 140–147 (TGNPFFTT) contribute to the UMP site. Residues threonine 167, tyrosine 173, and aspartate 176 each contribute to the ATP site.

It belongs to the UMP kinase family. As to quaternary structure, homohexamer.

Its subcellular location is the cytoplasm. The enzyme catalyses UMP + ATP = UDP + ADP. It participates in pyrimidine metabolism; CTP biosynthesis via de novo pathway; UDP from UMP (UMPK route): step 1/1. Inhibited by UTP. In terms of biological role, catalyzes the reversible phosphorylation of UMP to UDP. This Legionella pneumophila (strain Paris) protein is Uridylate kinase.